We begin with the raw amino-acid sequence, 1157 residues long: Folliculin-interacting protein 1 (1157 aa).

In terms of domain architecture, uDENN FNIP1/2-type spans 37 to 467 (FDPSQIRLIV…TVMPNGQPPI (431 aa)). 4 disordered regions span residues 92–120 (PGGD…CPKY), 616–665 (SQQE…TKVE), 769–796 (SPPT…NRDC), and 904–955 (VPHG…NYYG). The span at 95–111 (DSSSSLDSSINSSSSFS) shows a compositional bias: low complexity. In terms of domain architecture, cDENN FNIP1/2-type spans 475–1083 (SSQSVDMLAK…VSNLLHSTLQ (609 aa)). A compositionally biased stretch (basic and acidic residues) spans 651-664 (ADGHQPRTCQDTKV). Residues 904–916 (VPHGDRENAEKKV) show a composition bias toward basic and acidic residues. A dDENN FNIP1/2-type domain is found at 1093 to 1148 (FCVMHLEDRLQELYFKSKMLSEYLKGQMRVHVKELGVVLGIESSDLPLLAAVASTH).

Belongs to the FNIP family. In terms of assembly, homodimer and homomultimer. Heterodimer and heteromultimer with FNIP2. Component of the lysosomal folliculin complex (LFC).

It localises to the lysosome membrane. Its subcellular location is the cytoplasm. The protein localises to the cytosol. In terms of biological role, binding partner of the GTPase-activating protein FLCN: involved in the cellular response to amino acid availability by regulating the non-canonical mTORC1 signaling cascade controlling the MiT/TFE factors TFEB and TFE3. Required to promote FLCN recruitment to lysosomes and interaction with Rag GTPases, leading to activation of the non-canonical mTORC1 signaling. In low-amino acid conditions, component of the lysosomal folliculin complex (LFC) on the membrane of lysosomes, which inhibits the GTPase-activating activity of FLCN, thereby inactivating mTORC1 and promoting nuclear translocation of TFEB and TFE3. Upon amino acid restimulation, disassembly of the LFC complex liberates the GTPase-activating activity of FLCN, leading to activation of mTORC1 and subsequent inactivation of TFEB and TFE3. In addition to its role in mTORC1 signaling, also acts as a co-chaperone of HSP90AA1/Hsp90: inhibits the ATPase activity of HSP90AA1/Hsp90, leading to activate both kinase and non-kinase client proteins of HSP90AA1/Hsp90. Acts as a scaffold to load client protein FLCN onto HSP90AA1/Hsp90. This chain is Folliculin-interacting protein 1, found in Gallus gallus (Chicken).